The primary structure comprises 78 residues: Sec-independent protein translocase protein TatA (78 aa).

The helical transmembrane segment at 1-21 (MGGISIWQLLIIAVIVVLLFG) threads the bilayer. Residues 47 to 59 (ESEKKDADFEPKS) are compositionally biased toward basic and acidic residues. The disordered stretch occupies residues 47 to 78 (ESEKKDADFEPKSLEQQNKQAATESKKDKEQA). Residues 60 to 69 (LEQQNKQAAT) show a composition bias toward polar residues.

This sequence belongs to the TatA/E family. In terms of assembly, the Tat system comprises two distinct complexes: a TatABC complex, containing multiple copies of TatA, TatB and TatC subunits, and a separate TatA complex, containing only TatA subunits. Substrates initially bind to the TatABC complex, which probably triggers association of the separate TatA complex to form the active translocon.

Its subcellular location is the cell inner membrane. Part of the twin-arginine translocation (Tat) system that transports large folded proteins containing a characteristic twin-arginine motif in their signal peptide across membranes. TatA could form the protein-conducting channel of the Tat system. The protein is Sec-independent protein translocase protein TatA of Vibrio vulnificus (strain YJ016).